The primary structure comprises 171 residues: UPF0398 protein Sez_1569 (171 aa).

The protein belongs to the UPF0398 family.

This chain is UPF0398 protein Sez_1569, found in Streptococcus equi subsp. zooepidemicus (strain MGCS10565).